Reading from the N-terminus, the 325-residue chain is Protease HtpX homolog (325 aa).

Residues 20 to 40 traverse the membrane as a helical segment; that stretch reads IGYLLGGGGGMMIALVIAVAM. His130 lines the Zn(2+) pocket. Glu131 is a catalytic residue. His134 is a Zn(2+) binding site. Helical transmembrane passes span 145–165 and 173–193; these read IVAT…FLGG and VMGV…AMIV. Glu202 is a binding site for Zn(2+). Residues 288–325 form a disordered region; the sequence is AMTARAAAPSQNSGPWGQRSDNAGGNSNGGSRYRGPWS. The span at 306-325 shows a compositional bias: low complexity; the sequence is RSDNAGGNSNGGSRYRGPWS.

This sequence belongs to the peptidase M48B family. Zn(2+) serves as cofactor.

The protein resides in the cell inner membrane. In Brucella suis (strain ATCC 23445 / NCTC 10510), this protein is Protease HtpX homolog.